A 322-amino-acid polypeptide reads, in one-letter code: uncharacterized protein (322 aa).

Positions 174 to 207 (LQSRPTEGAKVSTNGRGFSSRPTGEGNFFGPKGR) are disordered. Positions 184–195 (VSTNGRGFSSRP) are enriched in polar residues.

The protein localises to the mitochondrion. This is an uncharacterized protein from Marchantia polymorpha (Common liverwort).